The following is a 61-amino-acid chain: Small ribosomal subunit protein uS14 (61 aa).

Residues Cys-24, Cys-27, Cys-40, and Cys-43 each contribute to the Zn(2+) site.

The protein belongs to the universal ribosomal protein uS14 family. Zinc-binding uS14 subfamily. In terms of assembly, part of the 30S ribosomal subunit. Contacts proteins S3 and S10. Zn(2+) serves as cofactor.

Binds 16S rRNA, required for the assembly of 30S particles and may also be responsible for determining the conformation of the 16S rRNA at the A site. This chain is Small ribosomal subunit protein uS14, found in Ruminiclostridium cellulolyticum (strain ATCC 35319 / DSM 5812 / JCM 6584 / H10) (Clostridium cellulolyticum).